A 131-amino-acid chain; its full sequence is Global transcriptional regulator Spx 2 (131 aa).

Residues cysteine 10 and cysteine 13 are joined by a disulfide bond.

Belongs to the ArsC family. Spx subfamily. Interacts with the C-terminal domain of the alpha subunit of the RNAP.

It is found in the cytoplasm. Functionally, global transcriptional regulator that plays a key role in stress response and exerts either positive or negative regulation of genes. Acts by interacting with the C-terminal domain of the alpha subunit of the RNA polymerase (RNAP). This interaction can enhance binding of RNAP to the promoter region of target genes and stimulate their transcription, or block interaction of RNAP with activator. The polypeptide is Global transcriptional regulator Spx 2 (Bacillus cereus (strain ATCC 14579 / DSM 31 / CCUG 7414 / JCM 2152 / NBRC 15305 / NCIMB 9373 / NCTC 2599 / NRRL B-3711)).